Consider the following 732-residue polypeptide: Catalase-peroxidase (732 aa).

The tryptophyl-tyrosyl-methioninium (Trp-Tyr) (with M-246) cross-link spans 97–220 (WHSAGTYRTS…LAAVQMGLIY (124 aa)). His98 (proton acceptor) is an active-site residue. The segment at residues 220–246 (YVNPEGPDGNPDPVAAGRDIRETFARM) is a cross-link (tryptophyl-tyrosyl-methioninium (Tyr-Met) (with W-97)). Residue His261 coordinates heme b.

This sequence belongs to the peroxidase family. Peroxidase/catalase subfamily. In terms of assembly, homodimer or homotetramer. Requires heme b as cofactor. In terms of processing, formation of the three residue Trp-Tyr-Met cross-link is important for the catalase, but not the peroxidase activity of the enzyme.

The catalysed reaction is H2O2 + AH2 = A + 2 H2O. It catalyses the reaction 2 H2O2 = O2 + 2 H2O. Bifunctional enzyme with both catalase and broad-spectrum peroxidase activity. In Chlorobium phaeobacteroides (strain DSM 266 / SMG 266 / 2430), this protein is Catalase-peroxidase.